The primary structure comprises 608 residues: Membrane protein insertase YidC (608 aa).

A helical membrane pass occupies residues 8-28 (LLLATALSFLVILGWYFFFPP). Residues 33–61 (PQPATEVTETAPQGDTTAPAAAPSAGAAT) form a disordered region. The next 5 helical transmembrane spans lie at 378 to 398 (MGVA…PLAY), 448 to 468 (LPIL…FVTL), 482 to 502 (LSVP…WAAP), 506 to 526 (SLLS…SMWV), and 542 to 562 (IFAW…SGLV).

Belongs to the OXA1/ALB3/YidC family. Type 1 subfamily. In terms of assembly, interacts with the Sec translocase complex via SecD. Specifically interacts with transmembrane segments of nascent integral membrane proteins during membrane integration.

It localises to the cell inner membrane. Functionally, required for the insertion and/or proper folding and/or complex formation of integral membrane proteins into the membrane. Involved in integration of membrane proteins that insert both dependently and independently of the Sec translocase complex, as well as at least some lipoproteins. Aids folding of multispanning membrane proteins. In Ruegeria sp. (strain TM1040) (Silicibacter sp.), this protein is Membrane protein insertase YidC.